Consider the following 853-residue polypeptide: Transforming growth factor beta receptor type 3 (853 aa).

Residues 1-23 form the signal peptide; sequence MAVTSHHMIPVMVVLMSACLATA. Residues 24-789 are Extracellular-facing; it reads GPEPSTRCEL…IFHGLDTLTV (766 aa). Residues asparagine 37, asparagine 144, and asparagine 493 are each glycosylated (N-linked (GlcNAc...) asparagine). Cysteine 55 and cysteine 200 form a disulfide bridge. In terms of domain architecture, ZP spans 456-730; it reads KCDHEKMVVA…PRCVTPDDAC (275 aa). The tract at residues 530-559 is disordered; that stretch reads SPGDSSGWPDGYEDLESGDNGFPGDGDEGE. 2 O-linked (Xyl...) (glycosaminoglycan) serine glycosylation sites follow: serine 535 and serine 546. 3 N-linked (GlcNAc...) asparagine glycosylation sites follow: asparagine 572, asparagine 591, and asparagine 698. 3 cysteine pairs are disulfide-bonded: cysteine 640-cysteine 706, cysteine 661-cysteine 730, and cysteine 711-cysteine 723. The tract at residues 737–751 is interaction with TGF-beta ligand; that stretch reads MIWTMMQNKKTFTKP. A helical membrane pass occupies residues 790–811; sequence MGIAFAAFVIGALLTGALWYIY. The Cytoplasmic segment spans residues 812 to 853; sequence SHTGETARRQQVPTSPPASENSSAAHSIGSTQSTPCSSSSTA. The segment covering 820 to 836 has biased composition (polar residues); that stretch reads RQQVPTSPPASENSSAA. Positions 820–853 are disordered; sequence RQQVPTSPPASENSSAAHSIGSTQSTPCSSSSTA. Over residues 838–853 the composition is skewed to low complexity; the sequence is SIGSTQSTPCSSSSTA. Residue threonine 842 is modified to Phosphothreonine.

Forms homodimers and homooligomers. Interacts with DYNLT4. Interacts with integrin ITGA5:ITGB1; this interaction promotes the internalization and trafficking of ITGA5:ITGB1 into endocytic vesicles. Interacts with TGFB1, BMP2, BMP5, BMP7 or GDF5 and inhibin A via the ligand binding domains. Interacts with ALK3/BMPR1A; this interaction results in the cell surface retention of BMPR1A. Interacts with ALK6/BMPR1B; this interaction enhances BMPR1B-mediated stimulation of the BMP signaling pathway. Interacts with the scaffolding protein beta-arrestin2/ARRB2; this interaction mediates internalization of TGFBR3 and thus regulates migration, actin cytoskeleton and activation of CDC42. Extensively modified by glycosaminoglycan groups (GAG). In terms of processing, phosphorylated in the cytoplasmic domain by the type II receptor TGFBR2 at THR-842 to mediate recruitment of ARRB2 and subsequent internalization of TGFBR2 and TGFBR3.

It is found in the cell membrane. Its subcellular location is the secreted. It localises to the extracellular space. The protein resides in the extracellular matrix. Cell surface receptor that regulates diverse cellular processes including cell proliferation, differentiation, migration, and apoptosis. Initiates BMP, inhibin, and TGF-beta signaling pathways by interacting with different ligands including TGFB1, BMP2, BMP5, BMP7 or GDF5. Alternatively, acts as a cell surface coreceptor for BMP ligands, serving to enhance ligand binding by differentially regulating BMPR1A/ALK3 and BMPR1B/ALK6 receptor trafficking. Promotes epithelial cell adhesion, focal adhesion formation and integrin signaling during epithelial cell spreading on fibronectin. By interacting with the scaffolding protein beta-arrestin2/ARRB2, regulates migration or actin cytoskeleton and promotes the activation of CDC42 as well as the inhibition of NF-kappa-B. In gonadotrope cells, acts as an inhibin A coreceptor and regulates follicle-stimulating hormone (FSH) levels and female fertility. Plays a role in the inhibition of directed and random cell migration in epithelial cells by altering the actin cytoskeletal organization. Participates in epithelial-mesenchymal transformation (EMT) upon binding to BMP2 or TGFB2, by activating the PAR6/SMURF1/RHOA pathway. The protein is Transforming growth factor beta receptor type 3 (Tgfbr3) of Rattus norvegicus (Rat).